The following is a 317-amino-acid chain: Acetyl-coenzyme A carboxylase carboxyl transferase subunit alpha (317 aa).

The CoA carboxyltransferase C-terminal domain maps to 39–293 (KLEAKAQKAL…KEAVVEALGA (255 aa)).

The protein belongs to the AccA family. In terms of assembly, acetyl-CoA carboxylase is a heterohexamer composed of biotin carboxyl carrier protein (AccB), biotin carboxylase (AccC) and two subunits each of ACCase subunit alpha (AccA) and ACCase subunit beta (AccD).

It localises to the cytoplasm. It carries out the reaction N(6)-carboxybiotinyl-L-lysyl-[protein] + acetyl-CoA = N(6)-biotinyl-L-lysyl-[protein] + malonyl-CoA. It participates in lipid metabolism; malonyl-CoA biosynthesis; malonyl-CoA from acetyl-CoA: step 1/1. Component of the acetyl coenzyme A carboxylase (ACC) complex. First, biotin carboxylase catalyzes the carboxylation of biotin on its carrier protein (BCCP) and then the CO(2) group is transferred by the carboxyltransferase to acetyl-CoA to form malonyl-CoA. This Beijerinckia indica subsp. indica (strain ATCC 9039 / DSM 1715 / NCIMB 8712) protein is Acetyl-coenzyme A carboxylase carboxyl transferase subunit alpha.